A 604-amino-acid chain; its full sequence is Serine protease 56 (604 aa).

Residues 1–22 (MPLAMLLLLLLLLSPDSQTAHG) form the signal peptide. Residues 70–94 (CQGPGRPRPQAPLLQDPPEPVQCGE) form a disordered region. Over residues 75-89 (RPRPQAPLLQDPPEP) the composition is skewed to pro residues. The N-linked (GlcNAc...) asparagine glycan is linked to Asn101. A Peptidase S1 domain is found at 109-341 (IVGGSTAPSG…FKDWLQEQMS (233 aa)). A disulfide bridge links Cys134 with Cys150. Residues His149 and Asp195 each act as charge relay system in the active site. Disulfide bonds link Cys229–Cys296, Cys260–Cys275, and Cys286–Cys317. Catalysis depends on Ser290, which acts as the Charge relay system. Disordered regions lie at residues 424 to 452 (RPGL…PREQ) and 578 to 604 (PQAP…PPVP).

The protein belongs to the peptidase S1 family. As to expression, expressed in the eye: present in the retina and in the optic nerve.

Its subcellular location is the endoplasmic reticulum membrane. Its function is as follows. Serine protease required during eye development. This Mus musculus (Mouse) protein is Serine protease 56 (Prss56).